Reading from the N-terminus, the 299-residue chain is Putative zinc-binding protein ORF12 (299 aa).

In Ictaluridae (bullhead catfishes), this protein is Putative zinc-binding protein ORF12 (ORF12).